The sequence spans 844 residues: Lysine-specific histone demethylase 1 homolog 1 (844 aa).

Positions Met1–Gly18 are enriched in basic and acidic residues. A disordered region spans residues Met1–Arg131. Residues Pro26–Asn40 are compositionally biased toward acidic residues. Composition is skewed to polar residues over residues Ala46–Gln62 and Asp107–Asn118. One can recognise an SWIRM domain in the interval Gly154–Ala255. Residues Glu295, Arg297, and Arg303 each coordinate FAD. A Nuclear localization signal motif is present at residues Leu516–Phe523. Glu679 is a binding site for FAD.

It belongs to the flavin monoamine oxidase family. As to quaternary structure, interacts with CZS. Interacts with OTU6/OTLD1. FAD is required as a cofactor. In terms of tissue distribution, expressed in the shoot and root apical regions of young seedlings. Expressed in cotyledons and inflorescences.

It is found in the nucleus. Its subcellular location is the cytoplasm. In terms of biological role, probable histone demethylase that reduces the levels of histone H3 'Lys-4' methylation in chromatin of the floral repressor FLOWERING LOCUS C (FLC) and the sporophytically silenced floral repressor FWA. Seems to act in partial redundancy with FLOWERING LOCUS D (FLD) to repress FLC expression. Required for cytosine methylation of FWA. Controls primary seed dormancy by regulating DOG1 and abscisic acid signaling-related genes. In association with OTU6/OTLD1, involved in transcriptional gene repression via histone deubiquitination and demethylation. In Arabidopsis thaliana (Mouse-ear cress), this protein is Lysine-specific histone demethylase 1 homolog 1.